The chain runs to 197 residues: Imidazoleglycerol-phosphate dehydratase (197 aa).

It belongs to the imidazoleglycerol-phosphate dehydratase family.

The protein resides in the cytoplasm. It carries out the reaction D-erythro-1-(imidazol-4-yl)glycerol 3-phosphate = 3-(imidazol-4-yl)-2-oxopropyl phosphate + H2O. The protein operates within amino-acid biosynthesis; L-histidine biosynthesis; L-histidine from 5-phospho-alpha-D-ribose 1-diphosphate: step 6/9. The chain is Imidazoleglycerol-phosphate dehydratase from Gloeobacter violaceus (strain ATCC 29082 / PCC 7421).